Here is a 430-residue protein sequence, read N- to C-terminus: Adenylosuccinate synthetase (430 aa).

GTP is bound by residues 12–18 (GDEGKGK) and 40–42 (GHT). The active-site Proton acceptor is the aspartate 13. Residues aspartate 13 and glycine 40 each contribute to the Mg(2+) site. IMP is bound by residues 13-16 (DEGK), 38-41 (NAGH), threonine 128, arginine 142, glutamine 223, threonine 238, and arginine 302. Histidine 41 acts as the Proton donor in catalysis. 298-304 (TTTGRPR) is a substrate binding site. Residues arginine 304, 330–332 (SID), and 412–414 (SVG) each bind GTP.

The protein belongs to the adenylosuccinate synthetase family. Homodimer. Mg(2+) serves as cofactor.

Its subcellular location is the cytoplasm. It carries out the reaction IMP + L-aspartate + GTP = N(6)-(1,2-dicarboxyethyl)-AMP + GDP + phosphate + 2 H(+). It participates in purine metabolism; AMP biosynthesis via de novo pathway; AMP from IMP: step 1/2. In terms of biological role, plays an important role in the de novo pathway of purine nucleotide biosynthesis. Catalyzes the first committed step in the biosynthesis of AMP from IMP. The chain is Adenylosuccinate synthetase from Streptococcus uberis (strain ATCC BAA-854 / 0140J).